Consider the following 67-residue polypeptide: MASSTIYNIFFRRNSSFYATIFVSAFFAKIGFDVFTDSVWKRANAGLTWDEVKPRFLNKDEDAEDDE.

Residues 1–17 (MASSTIYNIFFRRNSSF) lie on the Mitochondrial matrix side of the membrane. The chain crosses the membrane as a helical span at residues 18-43 (YATIFVSAFFAKIGFDVFTDSVWKRA). Over 44–67 (NAGLTWDEVKPRFLNKDEDAEDDE) the chain is Mitochondrial intermembrane.

The protein belongs to the UQCR10/QCR9 family. Component of the ubiquinol-cytochrome c oxidoreductase (cytochrome b-c1 complex, complex III, CIII), a multisubunit enzyme composed of 3 respiratory subunits cytochrome b, cytochrome c1 and Rieske protein, 2 core protein subunits, and additional low-molecular weight protein subunits. The complex exists as an obligatory dimer and forms supercomplexes (SCs) in the inner mitochondrial membrane with cytochrome c oxidase (complex IV, CIV). In fission yeast, the III(2)IV supercomplex displays a dual role, in both respiratory electron transfer and enzymatic cleavage of mitochondrial signal sequences, with integration of the peptidase activity with the III(2) respiratory system and a two-dimensional cytochrome c diffusion mechanism within the III(2)IV supercomplex.

Its subcellular location is the mitochondrion. The protein localises to the mitochondrion inner membrane. Component of the ubiquinol-cytochrome c oxidoreductase, a multisubunit transmembrane complex that is part of the mitochondrial electron transport chain which drives oxidative phosphorylation. The respiratory chain contains 3 multisubunit complexes succinate dehydrogenase (complex II, CII), ubiquinol-cytochrome c oxidoreductase (cytochrome b-c1 complex, complex III, CIII) and cytochrome c oxidase (complex IV, CIV), that cooperate to transfer electrons derived from NADH and succinate to molecular oxygen, creating an electrochemical gradient over the inner membrane that drives transmembrane transport and the ATP synthase. The cytochrome b-c1 complex catalyzes electron transfer from ubiquinol to cytochrome c, linking this redox reaction to translocation of protons across the mitochondrial inner membrane, with protons being carried across the membrane as hydrogens on the quinol. In the process called Q cycle, 2 protons are consumed from the matrix, 4 protons are released into the intermembrane space and 2 electrons are passed to cytochrome c. The III(2) supercomplex also displays mitochondrial processing peptidase (MPP) activity, containing alpha and beta MPP subunits qcr1 and qcr2, respectively, showing a dual role of III(2)IV in fission yeast. The protein is Cytochrome b-c1 complex subunit 9 (qcr9) of Schizosaccharomyces pombe (strain 972 / ATCC 24843) (Fission yeast).